Consider the following 242-residue polypeptide: UPF0309 protein BH3325 (242 aa).

Residues 34–217 (VSEAVMNGGR…HLLVQQGFEP (184 aa)) form the SIS domain.

Belongs to the UPF0309 family.

This is UPF0309 protein BH3325 from Halalkalibacterium halodurans (strain ATCC BAA-125 / DSM 18197 / FERM 7344 / JCM 9153 / C-125) (Bacillus halodurans).